Reading from the N-terminus, the 79-residue chain is uncharacterized protein (79 aa).

Transmembrane regions (helical) follow at residues cysteine 28 to alanine 48 and valine 51 to valine 71.

It localises to the cell membrane. This is an uncharacterized protein from Methanocaldococcus jannaschii (strain ATCC 43067 / DSM 2661 / JAL-1 / JCM 10045 / NBRC 100440) (Methanococcus jannaschii).